The chain runs to 399 residues: Tryptophan synthase beta chain (399 aa).

Lys-92 is subject to N6-(pyridoxal phosphate)lysine.

This sequence belongs to the TrpB family. In terms of assembly, tetramer of two alpha and two beta chains. The cofactor is pyridoxal 5'-phosphate.

The enzyme catalyses (1S,2R)-1-C-(indol-3-yl)glycerol 3-phosphate + L-serine = D-glyceraldehyde 3-phosphate + L-tryptophan + H2O. It functions in the pathway amino-acid biosynthesis; L-tryptophan biosynthesis; L-tryptophan from chorismate: step 5/5. The beta subunit is responsible for the synthesis of L-tryptophan from indole and L-serine. This chain is Tryptophan synthase beta chain, found in Bordetella pertussis (strain Tohama I / ATCC BAA-589 / NCTC 13251).